A 366-amino-acid polypeptide reads, in one-letter code: Chorismate synthase (366 aa).

NADP(+) contacts are provided by Arg-48 and Arg-54. FMN is bound by residues 125 to 127 (RSS), 238 to 239 (NA), Gly-278, 293 to 297 (KPTSS), and Arg-319.

It belongs to the chorismate synthase family. As to quaternary structure, homotetramer. It depends on FMNH2 as a cofactor.

The catalysed reaction is 5-O-(1-carboxyvinyl)-3-phosphoshikimate = chorismate + phosphate. The protein operates within metabolic intermediate biosynthesis; chorismate biosynthesis; chorismate from D-erythrose 4-phosphate and phosphoenolpyruvate: step 7/7. In terms of biological role, catalyzes the anti-1,4-elimination of the C-3 phosphate and the C-6 proR hydrogen from 5-enolpyruvylshikimate-3-phosphate (EPSP) to yield chorismate, which is the branch point compound that serves as the starting substrate for the three terminal pathways of aromatic amino acid biosynthesis. This reaction introduces a second double bond into the aromatic ring system. In Pseudoalteromonas atlantica (strain T6c / ATCC BAA-1087), this protein is Chorismate synthase.